The following is a 274-amino-acid chain: Rhamnulose-1-phosphate aldolase (274 aa).

The active site involves Glu117. 3 residues coordinate Zn(2+): His141, His143, and His212.

The protein belongs to the aldolase class II family. RhaD subfamily. In terms of assembly, homotetramer. Requires Zn(2+) as cofactor.

Its subcellular location is the cytoplasm. The enzyme catalyses L-rhamnulose 1-phosphate = (S)-lactaldehyde + dihydroxyacetone phosphate. Its pathway is carbohydrate degradation; L-rhamnose degradation; glycerone phosphate from L-rhamnose: step 3/3. Functionally, catalyzes the reversible cleavage of L-rhamnulose-1-phosphate to dihydroxyacetone phosphate (DHAP) and L-lactaldehyde. This chain is Rhamnulose-1-phosphate aldolase, found in Yersinia pseudotuberculosis serotype IB (strain PB1/+).